Consider the following 387-residue polypeptide: uncharacterized protein (387 aa).

The protein localises to the mitochondrion. This is an uncharacterized protein from Paramecium tetraurelia.